The sequence spans 448 residues: UPF0053 protein sll0260 (448 aa).

The CNNM transmembrane domain maps to 2 to 203; it reads FSSSVELELF…AQAGMIDEAE (202 aa). The next 4 helical transmembrane spans lie at 11 to 31, 62 to 82, 106 to 126, and 142 to 162; these read FFIF…IAIV, FLSA…AVGG, LSIS…GELV, and VAPA…LLGV. 2 CBS domains span residues 222–281 and 286–345; these read MTPR…GQKI and IVQP…NDDE.

It belongs to the UPF0053 family.

It localises to the cell membrane. In Synechocystis sp. (strain ATCC 27184 / PCC 6803 / Kazusa), this protein is UPF0053 protein sll0260.